The primary structure comprises 126 residues: Large ribosomal subunit protein bL12 (126 aa).

Belongs to the bacterial ribosomal protein bL12 family. In terms of assembly, homodimer. Part of the ribosomal stalk of the 50S ribosomal subunit. Forms a multimeric L10(L12)X complex, where L10 forms an elongated spine to which 2 to 4 L12 dimers bind in a sequential fashion. Binds GTP-bound translation factors.

In terms of biological role, forms part of the ribosomal stalk which helps the ribosome interact with GTP-bound translation factors. Is thus essential for accurate translation. The protein is Large ribosomal subunit protein bL12 of Rhizobium meliloti (strain 1021) (Ensifer meliloti).